The following is a 106-amino-acid chain: MRRKNQIKKRIIELIELAYNTAKSGNLELAREYVKLAEMYSRKGKVEIPLKYKRMFCRKCYTPLIIGVTERRRMRSKILIRTCLICNWQRRYVLSGNKRSDKENES.

Positions 57, 60, 83, and 86 each coordinate Zn(2+).

Belongs to the eukaryotic/archaeal RNase P protein component 4 family. As to quaternary structure, consists of a catalytic RNA component and at least 4-5 protein subunits. Zn(2+) is required as a cofactor.

The protein localises to the cytoplasm. It catalyses the reaction Endonucleolytic cleavage of RNA, removing 5'-extranucleotides from tRNA precursor.. Functionally, part of ribonuclease P, a protein complex that generates mature tRNA molecules by cleaving their 5'-ends. This chain is Ribonuclease P protein component 4, found in Saccharolobus solfataricus (strain ATCC 35092 / DSM 1617 / JCM 11322 / P2) (Sulfolobus solfataricus).